The chain runs to 532 residues: Bone morphogenetic protein receptor type-1A (532 aa).

A signal peptide spans 1-23 (MTQLYTYIRLLGACLFIISHVQG). Residues 24-152 (QNLDSMLHGT…IGPFFDGSVR (129 aa)) lie on the Extracellular side of the membrane. Cystine bridges form between Cys61–Cys82, Cys63–Cys67, and Cys76–Cys100. Asn73 is a glycosylation site (N-linked (GlcNAc...) asparagine). The mediates specificity for BMP ligand stretch occupies residues 107 to 109 (DFQ). Disulfide bonds link Cys110-Cys124 and Cys125-Cys130. A helical membrane pass occupies residues 153–176 (WLAVLISMAVCIVAMIVFSSCFCY). Topologically, residues 177-532 (KHYCKSISSR…KMVESQDVKI (356 aa)) are cytoplasmic. Positions 204–233 (ESLKDLIDQSQSSGSGSGLPLLVQRTIAKQ) constitute a GS domain. The Protein kinase domain occupies 234 to 525 (IQMVRQVGKG…RIKKTLAKMV (292 aa)). ATP-binding positions include 240-248 (VGKGRYGEV) and Lys261. Asp362 (proton acceptor) is an active-site residue.

The protein belongs to the protein kinase superfamily. TKL Ser/Thr protein kinase family. TGFB receptor subfamily. As to quaternary structure, interacts with low affinity with GDF5; positively regulates chondrocyte differentiation. Interacts with BMP4. Interacts with SCUBE3. Interacts with TSC22D1/TSC-22. Interacts with BMP2; the interaction may induce HAMP expression. Interacts with BMP6. Interacts with heterodimers composed of BMP2 and BMP6 in vitro; the interaction may induce HAMP expression. Requires Mg(2+) as cofactor. The cofactor is Mn(2+). Post-translationally, glycosylated.

The protein resides in the cell membrane. The protein localises to the cell surface. The catalysed reaction is L-threonyl-[receptor-protein] + ATP = O-phospho-L-threonyl-[receptor-protein] + ADP + H(+). It catalyses the reaction L-seryl-[receptor-protein] + ATP = O-phospho-L-seryl-[receptor-protein] + ADP + H(+). Its function is as follows. On ligand binding, forms a receptor complex consisting of two type II and two type I transmembrane serine/threonine kinases. Type II receptors phosphorylate and activate type I receptors which autophosphorylate, then bind and activate SMAD transcriptional regulators. Receptor for BMP2, BMP4, GDF5 and GDF6. Positively regulates chondrocyte differentiation through GDF5 interaction. Mediates induction of adipogenesis by GDF6. May promote the expression of HAMP, potentially via its interaction with BMP2. The protein is Bone morphogenetic protein receptor type-1A (Bmpr1a) of Rattus norvegicus (Rat).